A 148-amino-acid polypeptide reads, in one-letter code: Probable glycine cleavage system H protein 2 (148 aa).

The 83-residue stretch at 32–114 folds into the Lipoyl-binding domain; it reads TIVVGITDLA…YGKGWLVKMK (83 aa). Lysine 73 is subject to N6-lipoyllysine.

It belongs to the GcvH family. The glycine cleavage system is composed of four proteins: P, T, L and H. (R)-lipoate is required as a cofactor.

Its function is as follows. The glycine cleavage system catalyzes the degradation of glycine. The H protein shuttles the methylamine group of glycine from the P protein to the T protein. This chain is Probable glycine cleavage system H protein 2, found in Saccharolobus solfataricus (strain ATCC 35092 / DSM 1617 / JCM 11322 / P2) (Sulfolobus solfataricus).